A 490-amino-acid chain; its full sequence is Aspartyl/glutamyl-tRNA(Asn/Gln) amidotransferase subunit B (490 aa).

Belongs to the GatB/GatE family. GatB subfamily. In terms of assembly, heterotrimer of A, B and C subunits.

The enzyme catalyses L-glutamyl-tRNA(Gln) + L-glutamine + ATP + H2O = L-glutaminyl-tRNA(Gln) + L-glutamate + ADP + phosphate + H(+). The catalysed reaction is L-aspartyl-tRNA(Asn) + L-glutamine + ATP + H2O = L-asparaginyl-tRNA(Asn) + L-glutamate + ADP + phosphate + 2 H(+). In terms of biological role, allows the formation of correctly charged Asn-tRNA(Asn) or Gln-tRNA(Gln) through the transamidation of misacylated Asp-tRNA(Asn) or Glu-tRNA(Gln) in organisms which lack either or both of asparaginyl-tRNA or glutaminyl-tRNA synthetases. The reaction takes place in the presence of glutamine and ATP through an activated phospho-Asp-tRNA(Asn) or phospho-Glu-tRNA(Gln). The protein is Aspartyl/glutamyl-tRNA(Asn/Gln) amidotransferase subunit B of Prochlorococcus marinus (strain MIT 9312).